The chain runs to 584 residues: Arginine--tRNA ligase (584 aa).

The short motif at Pro-126–His-136 is the 'HIGH' region element.

The protein belongs to the class-I aminoacyl-tRNA synthetase family. Monomer.

It is found in the cytoplasm. The catalysed reaction is tRNA(Arg) + L-arginine + ATP = L-arginyl-tRNA(Arg) + AMP + diphosphate. The chain is Arginine--tRNA ligase from Synechococcus elongatus (strain ATCC 33912 / PCC 7942 / FACHB-805) (Anacystis nidulans R2).